The primary structure comprises 674 residues: 1,4-alpha-glucan branching enzyme GlgB 1 (674 aa).

The active-site Nucleophile is aspartate 336. Residue glutamate 389 is the Proton donor of the active site.

Belongs to the glycosyl hydrolase 13 family. GlgB subfamily. In terms of assembly, monomer.

It catalyses the reaction Transfers a segment of a (1-&gt;4)-alpha-D-glucan chain to a primary hydroxy group in a similar glucan chain.. The protein operates within glycan biosynthesis; glycogen biosynthesis. Catalyzes the formation of the alpha-1,6-glucosidic linkages in glycogen by scission of a 1,4-alpha-linked oligosaccharide from growing alpha-1,4-glucan chains and the subsequent attachment of the oligosaccharide to the alpha-1,6 position. The protein is 1,4-alpha-glucan branching enzyme GlgB 1 (glgB1) of Clostridium perfringens (strain 13 / Type A).